The chain runs to 122 residues: Small ribosomal subunit protein uS13 (122 aa).

The interval 96 to 122 (LPVRGQRTKTNSRTRKGKRKTIAGKKK) is disordered. Positions 101–122 (QRTKTNSRTRKGKRKTIAGKKK) are enriched in basic residues.

It belongs to the universal ribosomal protein uS13 family. As to quaternary structure, part of the 30S ribosomal subunit. Forms a loose heterodimer with protein S19. Forms two bridges to the 50S subunit in the 70S ribosome.

Functionally, located at the top of the head of the 30S subunit, it contacts several helices of the 16S rRNA. In the 70S ribosome it contacts the 23S rRNA (bridge B1a) and protein L5 of the 50S subunit (bridge B1b), connecting the 2 subunits; these bridges are implicated in subunit movement. Contacts the tRNAs in the A and P-sites. The sequence is that of Small ribosomal subunit protein uS13 from Chlamydia trachomatis serovar L2 (strain ATCC VR-902B / DSM 19102 / 434/Bu).